The following is a 599-amino-acid chain: Aspartate--tRNA(Asp/Asn) ligase (599 aa).

Residue glutamate 172 coordinates L-aspartate. The aspartate stretch occupies residues 196-199 (QLFK). Arginine 218 lines the L-aspartate pocket. ATP-binding positions include 218–220 (RDE) and glutamine 227. An L-aspartate-binding site is contributed by histidine 451. Glutamate 485 lines the ATP pocket. Residue arginine 492 participates in L-aspartate binding. Position 537–540 (537–540 (GLDR)) interacts with ATP.

It belongs to the class-II aminoacyl-tRNA synthetase family. Type 1 subfamily. Homodimer.

It is found in the cytoplasm. It carries out the reaction tRNA(Asx) + L-aspartate + ATP = L-aspartyl-tRNA(Asx) + AMP + diphosphate. Its function is as follows. Aspartyl-tRNA synthetase with relaxed tRNA specificity since it is able to aspartylate not only its cognate tRNA(Asp) but also tRNA(Asn). Reaction proceeds in two steps: L-aspartate is first activated by ATP to form Asp-AMP and then transferred to the acceptor end of tRNA(Asp/Asn). This Dechloromonas aromatica (strain RCB) protein is Aspartate--tRNA(Asp/Asn) ligase.